Consider the following 305-residue polypeptide: tRNA pseudouridine synthase B (305 aa).

The active-site Nucleophile is the Asp48.

This sequence belongs to the pseudouridine synthase TruB family. Type 1 subfamily.

The enzyme catalyses uridine(55) in tRNA = pseudouridine(55) in tRNA. Its function is as follows. Responsible for synthesis of pseudouridine from uracil-55 in the psi GC loop of transfer RNAs. The chain is tRNA pseudouridine synthase B from Actinobacillus pleuropneumoniae serotype 5b (strain L20).